Consider the following 80-residue polypeptide: Small ribosomal subunit protein bS16 (80 aa).

Belongs to the bacterial ribosomal protein bS16 family.

This Blochmanniella pennsylvanica (strain BPEN) protein is Small ribosomal subunit protein bS16.